Consider the following 252-residue polypeptide: Phosphonates import ATP-binding protein PhnC 1 (252 aa).

The ABC transporter domain occupies I2–S244. Residue G35–S42 participates in ATP binding.

Belongs to the ABC transporter superfamily. Phosphonates importer (TC 3.A.1.9.1) family. In terms of assembly, the complex is composed of two ATP-binding proteins (PhnC), two transmembrane proteins (PhnE) and a solute-binding protein (PhnD).

It localises to the cell inner membrane. It catalyses the reaction phosphonate(out) + ATP + H2O = phosphonate(in) + ADP + phosphate + H(+). Part of the ABC transporter complex PhnCDE involved in phosphonates import. Responsible for energy coupling to the transport system. This chain is Phosphonates import ATP-binding protein PhnC 1, found in Trichodesmium erythraeum (strain IMS101).